The following is a 287-amino-acid chain: Probable ABC transporter extracellular-binding protein YckB (287 aa).

The signal sequence occupies residues Met-1–Ala-24. A lipid anchor (N-palmitoyl cysteine) is attached at Cys-25. Cys-25 carries the S-diacylglycerol cysteine lipid modification.

It belongs to the bacterial solute-binding protein 3 family.

Its subcellular location is the cell membrane. Functionally, probably part of a binding-protein-dependent transport system. In Bacillus subtilis (strain 168), this protein is Probable ABC transporter extracellular-binding protein YckB (yckB).